The sequence spans 366 residues: Ribosomal RNA large subunit methyltransferase M (366 aa).

S-adenosyl-L-methionine-binding positions include serine 188, 221–224 (CPGG), aspartate 240, aspartate 260, and aspartate 277. The active-site Proton acceptor is lysine 306.

The protein belongs to the class I-like SAM-binding methyltransferase superfamily. RNA methyltransferase RlmE family. RlmM subfamily. Monomer.

The protein localises to the cytoplasm. The catalysed reaction is cytidine(2498) in 23S rRNA + S-adenosyl-L-methionine = 2'-O-methylcytidine(2498) in 23S rRNA + S-adenosyl-L-homocysteine + H(+). Functionally, catalyzes the 2'-O-methylation at nucleotide C2498 in 23S rRNA. In Salmonella newport (strain SL254), this protein is Ribosomal RNA large subunit methyltransferase M.